The primary structure comprises 116 residues: Beta-2-microglobulin (116 aa).

Residues 1 to 19 (MRAIITFALFCVLYVTVQG) form the signal peptide. Residues 24–110 (PKVQVYSHFP…VRHMNNKNIY (87 aa)) form the Ig-like C1-type domain. Cys-44 and Cys-99 are oxidised to a cystine.

The protein belongs to the beta-2-microglobulin family. In terms of assembly, heterodimer of an alpha chain and a beta chain. Beta-2-microglobulin is the beta-chain of major histocompatibility complex class I molecules.

It is found in the secreted. Functionally, component of the class I major histocompatibility complex (MHC). Involved in the presentation of peptide antigens to the immune system. This chain is Beta-2-microglobulin (b2m), found in Cyprinus carpio (Common carp).